Consider the following 2211-residue polypeptide: Nonribosomal peptide synthetase 13 (2211 aa).

Positions 76–475 (TYAELDSLSD…IEHHLQLTLP (400 aa)) are adenylation 1. The 78-residue stretch at 594 to 671 (PPSTPKEATI…EQSKRAGLIQ (78 aa)) folds into the Carrier 1 domain. Ser631 carries the O-(pantetheine 4'-phosphoryl)serine modification. The tract at residues 710-975 (EDIYPCTALQ…IATVPTRIRV (266 aa)) is condensation 1. The segment at 1169-1563 (TYRELWAHSS…LGAVEASVMR (395 aa)) is adenylation 2. The 80-residue stretch at 1677-1756 (PMSDDNERRL…RSRHLITEQA (80 aa)) folds into the Carrier 2 domain. Residue Ser1714 is modified to O-(pantetheine 4'-phosphoryl)serine. Positions 1814-2069 (HFQFDLSGAV…CTNYIPYRLS (256 aa)) are condensation 2.

It belongs to the NRP synthetase family.

It carries out the reaction L-proline + L-tryptophan + 2 ATP = brevianamide F + 2 AMP + 2 diphosphate + 2 H(+). Its pathway is mycotoxin biosynthesis. Its function is as follows. Nonribosomal peptide synthetase; part of the gene cluster that mediates the biosynthesis of fumitremorgins, indole alkaloids that carry not only intriguing chemical structures, but also interesting biological and pharmacological activities. The biosynthesis of fumitremorgin-type alkaloids begins by condensation of the two amino acids L-tryptophan and L-proline to brevianamide F, catalyzed by the non-ribosomal peptide synthetase ftmA. Brevianamide F is then prenylated by the prenyltransferase ftmPT1/ftmB in the presence of dimethylallyl diphosphate, resulting in the formation of tryprostatin B. The three cytochrome P450 monooxygenases, ftmP450-1/ftmC, ftmP450-2/ftmE and ftmP450-3/FtmG, are responsible for the conversion of tryprostatin B to 6-hydroxytryprostatin B, tryprostatin A to fumitremorgin C and fumitremorgin C to 12,13-dihydroxyfumitremorgin C, respectively. The putative methyltransferase ftmMT/ftmD is expected for the conversion of 6-hydroxytryprostatin B to tryprostatin A. FtmPT2/FtmH catalyzes the prenylation of 12,13-dihydroxyfumitre-morgin C in the presence of dimethylallyl diphosphate, resulting in the formation of fumitremorgin B. Fumitremorgin B is further converted to verruculogen by ftmOx1/ftmF via the insertion of an endoperoxide bond between the two prenyl moieties. In some fungal species, verruculogen is further converted to fumitremorgin A, but the enzymes involved in this step have not been identified yet. The protein is Nonribosomal peptide synthetase 13 of Aspergillus fumigatus (Neosartorya fumigata).